The sequence spans 354 residues: Neuronal growth regulator 1 (354 aa).

Residues 1–37 (MDMMLLVQGACCSNQWLAAVLLSLCCLLPSCLPAGQS) form the signal peptide. 3 consecutive Ig-like C2-type domains span residues 38–134 (VDFP…VHLT), 139–221 (PKIY…KVVV), and 225–313 (PTIQ…LPLN). C60 and C118 are joined by a disulfide. Residues N73 and N155 are each glycosylated (N-linked (GlcNAc...) asparagine). 2 disulfide bridges follow: C160–C203 and C245–C297. Y187 carries the post-translational modification Phosphotyrosine. N275, N286, N294, and N307 each carry an N-linked (GlcNAc...) asparagine glycan. G324 is lipidated: GPI-anchor amidated glycine. Positions 325–354 (SADVLFSCWYLVLTLSSFTSIFYLKNAILQ) are cleaved as a propeptide — removed in mature form.

The protein belongs to the immunoglobulin superfamily. IgLON family.

The protein resides in the cell membrane. May be involved in cell-adhesion. May function as a trans-neural growth-promoting factor in regenerative axon sprouting in the mammalian brain. The sequence is that of Neuronal growth regulator 1 (NEGR1) from Pongo abelii (Sumatran orangutan).